The chain runs to 142 residues: Large ribosomal subunit protein uL13 (142 aa).

Belongs to the universal ribosomal protein uL13 family. Part of the 50S ribosomal subunit.

Its function is as follows. This protein is one of the early assembly proteins of the 50S ribosomal subunit, although it is not seen to bind rRNA by itself. It is important during the early stages of 50S assembly. The protein is Large ribosomal subunit protein uL13 of Shewanella frigidimarina (strain NCIMB 400).